Consider the following 512-residue polypeptide: Maturase K (512 aa).

Belongs to the intron maturase 2 family. MatK subfamily.

The protein resides in the plastid. The protein localises to the chloroplast. In terms of biological role, usually encoded in the trnK tRNA gene intron. Probably assists in splicing its own and other chloroplast group II introns. This chain is Maturase K, found in Amorphophallus paeoniifolius (Whitespot giant arum).